The chain runs to 635 residues: MERWNINDSSKIYNLDNWGADLFSINKKGNVCVHPSPSSKSSIDLRVLVDDLIKRKIKPPILLRFMDVLQGRIASINRAFKSAISENDYPAKYQTFFPIKVNQQRQVVEAIASYGKRYNIGLEVGSKPELVAGISISSGNNLPIICNGYKDSEYIETVLYATAIGYDITLVIEKLFELEKVIELVKKTGIQPRLGIRVKLSSKGTGKWATSGGEDAKFGLRMSEIIAAIDLLEENGLLDRVKLIHFHIGSQITKIDKIKTALIEGARVYTELRKMGMGIEFVDIGGGLGVDYDGSKSSYFSSVNYSVEEYANDVIYQIKNICDDAGVECPNIISESGRATVAHYSVLVTNVLNTNTQRLTPDFEEELAAAEKLAPTVKKLVDIHKSIDRYSLREDYHDTVQLIQEAVSLFNLGYLTLNERAMAEWLYGKIIKKINSIVEKIKPIPEELQNFQLALRQTYFANFSLFQSIPDSWAIDQLFPIVPIQRLNQKPDVIASIADITCDSDGEITSFVGENGRTKFLPLHKIRKDEDYYIGFFLIGAYQEILGDMHNLFGDTNAVHITFNKKTGYMIDTVINGDACWESLKYVQYKGPEILKRVREHLEKGVAQRKVSIEESSHFIELLDRTLLGYTYLGE.

Lys100 is modified (N6-(pyridoxal phosphate)lysine). 282 to 292 is a binding site for substrate; it reads VDIGGGLGVDY.

This sequence belongs to the Orn/Lys/Arg decarboxylase class-II family. SpeA subfamily. Mg(2+) serves as cofactor. The cofactor is pyridoxal 5'-phosphate.

The enzyme catalyses L-arginine + H(+) = agmatine + CO2. The protein operates within amine and polyamine biosynthesis; agmatine biosynthesis; agmatine from L-arginine: step 1/1. In terms of biological role, catalyzes the biosynthesis of agmatine from arginine. The chain is Biosynthetic arginine decarboxylase from Geotalea daltonii (strain DSM 22248 / JCM 15807 / FRC-32) (Geobacter daltonii).